Here is a 535-residue protein sequence, read N- to C-terminus: CTP synthase (535 aa).

Residues 1 to 267 (MTKYIFVTGG…DQIVCDHLKL (267 aa)) form an amidoligase domain region. Ser13 is a binding site for CTP. A UTP-binding site is contributed by Ser13. Position 14–19 (14–19 (SLGKGI)) interacts with ATP. Residue Tyr54 participates in L-glutamine binding. Asp71 serves as a coordination point for ATP. Mg(2+)-binding residues include Asp71 and Glu141. Residues 148 to 150 (DIE), 188 to 193 (KTKPTQ), and Lys224 contribute to the CTP site. Residues 188 to 193 (KTKPTQ) and Lys224 contribute to the UTP site. 240–242 (RDA) contributes to the ATP binding site. In terms of domain architecture, Glutamine amidotransferase type-1 spans 292–534 (KIALVGKYVE…VSASITNKES (243 aa)). Position 354 (Gly354) interacts with L-glutamine. Residue Cys381 is the Nucleophile; for glutamine hydrolysis of the active site. L-glutamine is bound by residues 382 to 385 (LGMQ), Glu405, and Arg462. Catalysis depends on residues His507 and Glu509.

This sequence belongs to the CTP synthase family. In terms of assembly, homotetramer.

It carries out the reaction UTP + L-glutamine + ATP + H2O = CTP + L-glutamate + ADP + phosphate + 2 H(+). The enzyme catalyses L-glutamine + H2O = L-glutamate + NH4(+). The catalysed reaction is UTP + NH4(+) + ATP = CTP + ADP + phosphate + 2 H(+). It participates in pyrimidine metabolism; CTP biosynthesis via de novo pathway; CTP from UDP: step 2/2. With respect to regulation, allosterically activated by GTP, when glutamine is the substrate; GTP has no effect on the reaction when ammonia is the substrate. The allosteric effector GTP functions by stabilizing the protein conformation that binds the tetrahedral intermediate(s) formed during glutamine hydrolysis. Inhibited by the product CTP, via allosteric rather than competitive inhibition. Catalyzes the ATP-dependent amination of UTP to CTP with either L-glutamine or ammonia as the source of nitrogen. Regulates intracellular CTP levels through interactions with the four ribonucleotide triphosphates. This is CTP synthase from Bacillus mycoides (strain KBAB4) (Bacillus weihenstephanensis).